A 779-amino-acid polypeptide reads, in one-letter code: Endonuclease MutS2 (779 aa).

328–335 contributes to the ATP binding site; that stretch reads GPNTGGKT. The Smr domain maps to 704-779; sequence LDLRGKRYEE…GSGATIVTLG (76 aa).

This sequence belongs to the DNA mismatch repair MutS family. MutS2 subfamily. In terms of assembly, homodimer. Binds to stalled ribosomes, contacting rRNA.

Its function is as follows. Endonuclease that is involved in the suppression of homologous recombination and thus may have a key role in the control of bacterial genetic diversity. Acts as a ribosome collision sensor, splitting the ribosome into its 2 subunits. Detects stalled/collided 70S ribosomes which it binds and splits by an ATP-hydrolysis driven conformational change. Acts upstream of the ribosome quality control system (RQC), a ribosome-associated complex that mediates the extraction of incompletely synthesized nascent chains from stalled ribosomes and their subsequent degradation. Probably generates substrates for RQC. In Streptococcus pyogenes serotype M18 (strain MGAS8232), this protein is Endonuclease MutS2.